The following is a 318-amino-acid chain: Porphobilinogen deaminase (318 aa).

Cys-241 carries the post-translational modification S-(dipyrrolylmethanemethyl)cysteine.

Belongs to the HMBS family. In terms of assembly, monomer. It depends on dipyrromethane as a cofactor.

The enzyme catalyses 4 porphobilinogen + H2O = hydroxymethylbilane + 4 NH4(+). It functions in the pathway porphyrin-containing compound metabolism; protoporphyrin-IX biosynthesis; coproporphyrinogen-III from 5-aminolevulinate: step 2/4. Its function is as follows. Tetrapolymerization of the monopyrrole PBG into the hydroxymethylbilane pre-uroporphyrinogen in several discrete steps. In Geobacter sulfurreducens (strain ATCC 51573 / DSM 12127 / PCA), this protein is Porphobilinogen deaminase.